Here is a 20-residue protein sequence, read N- to C-terminus: L-amino-acid oxidase L1 (20 aa).

The protein belongs to the flavin monoamine oxidase family. FIG1 subfamily. As to quaternary structure, monomer. This is in contrast with most of its orthologs, that are non-covalently linked homodimers. FAD is required as a cofactor. Post-translationally, N-glycosylated. Expressed by the venom gland.

It is found in the secreted. It catalyses the reaction an L-alpha-amino acid + O2 + H2O = a 2-oxocarboxylate + H2O2 + NH4(+). It carries out the reaction L-leucine + O2 + H2O = 4-methyl-2-oxopentanoate + H2O2 + NH4(+). The enzyme catalyses L-phenylalanine + O2 + H2O = 3-phenylpyruvate + H2O2 + NH4(+). The catalysed reaction is L-tryptophan + O2 + H2O = indole-3-pyruvate + H2O2 + NH4(+). It catalyses the reaction L-methionine + O2 + H2O = 4-methylsulfanyl-2-oxobutanoate + H2O2 + NH4(+). It carries out the reaction L-isoleucine + O2 + H2O = (S)-3-methyl-2-oxopentanoate + H2O2 + NH4(+). The enzyme catalyses L-tyrosine + O2 + H2O = 3-(4-hydroxyphenyl)pyruvate + H2O2 + NH4(+). Catalyzes an oxidative deamination of predominantly hydrophobic and aromatic L-amino acids, thus producing hydrogen peroxide that may contribute to the diverse toxic effects of this enzyme. Is active on L-Met, L-Ile, L-Leu, L-Phe, L-Trp, and L-Tyr. Exhibits diverse biological activities, such as hemorrhage, hemolysis, edema, apoptosis of vascular endothelial cells or tumor cell lines, antibacterial and antiparasitic activities, as well as regulation of platelet aggregation. Its effect on platelets is controversial, since it either induces aggregation or inhibits agonist-induced aggregation. These different effects are probably due to different experimental conditions. The sequence is that of L-amino-acid oxidase L1 from Daboia russelii (Russel's viper).